The chain runs to 83 residues: Putative membrane protein insertion efficiency factor (83 aa).

Residues 64-83 (GGFDPVPLKKDKNSKTTHHH) form a disordered region.

Belongs to the UPF0161 family.

Its subcellular location is the cell membrane. In terms of biological role, could be involved in insertion of integral membrane proteins into the membrane. The sequence is that of Putative membrane protein insertion efficiency factor from Staphylococcus epidermidis (strain ATCC 12228 / FDA PCI 1200).